The sequence spans 179 residues: Stathmin-2 (179 aa).

Residues 1 to 26 are membrane attachment; it reads MAKTAMAYKEKMKELSMLSLICSCFY. Residues serine 16, serine 50, serine 62, serine 73, serine 80, and serine 97 each carry the phosphoserine modification. The SLD domain maps to 38-179; the sequence is DDMEVKQINK…NKELQVELSG (142 aa). The regulatory/phosphorylation domain stretch occupies residues 39 to 96; it reads DMEVKQINKRASGQAFELILKPPSPVSEAPRTLASPKKKELSLEEIQKKLEAAEERRK. A coiled-coil region spans residues 74–179; the sequence is PKKKELSLEE…NKELQVELSG (106 aa).

The protein belongs to the stathmin family. As to expression, expression is neuron-specific and found in cerebellum, forebrain, midbrain, tectum and spinal cord.

Its subcellular location is the cytoplasm. The protein resides in the perinuclear region. The protein localises to the cell projection. It is found in the growth cone. It localises to the membrane. Its subcellular location is the axon. The protein resides in the lamellipodium. Is a key regulator of neurite extension through regulation of microtubule instabilily. This chain is Stathmin-2 (STMN2), found in Gallus gallus (Chicken).